A 428-amino-acid polypeptide reads, in one-letter code: MQKLVKTWLKRSKRIRGVLLQFSKELFFEFNERGCQRSAAALTYMTLFALVPLMTVTYTMFSAIPAFDGVGDQLNGLIFHHFLPETGEEVSQYLSDFSSQARRLSGVGVVMLLVTAYLMLRNIETTFNSIWGVKQARSGLSGYLLYWAILSVGPILVAAAFLLSTYLLSVQIMLEDLDGLGVMQLVYRVVPWALTSAAFTLLFVAVPNCRVPFKFGAIGGVITAFAFEVVKAVFGYIVANSSFKLIYGAFAVVPLFLLWVNLLWTIILGGAVFVRTLAEHSYASRISRLSDMIVVLICLALFREKAALGESVSDRDCVRLGIGLVHWQRMRSLMVEHRWIAVTESGDYVLSRDLRRANIWEVASMVRMPVSEELSSLRENIAGRAPWFADFLERQSELRSHAESAFSVSLESLFAAEHEEEKPLTDQT.

7 helical membrane-spanning segments follow: residues 47-67 (LFAL…IPAF), 104-124 (LSGV…RNIE), 143-163 (YLLY…AFLL), 189-209 (VVPW…VPNC), 218-238 (IGGV…GYIV), 248-268 (GAFA…TIIL), and 292-312 (MIVV…GESV).

Belongs to the UPF0761 family.

The protein localises to the cell inner membrane. This is UPF0761 membrane protein TERTU_3006 from Teredinibacter turnerae (strain ATCC 39867 / T7901).